The sequence spans 904 residues: MRQTLPCIYFWGGLLPFGMLCASSTTKCTVSHEVADCSHLKLTQVPDDLPTNITVLNLTHNQLRRLPAANFTRYSQLTSLDVGFNTISKLEPELCQKLPMLKVLNLQHNELSQLSDKTFAFCTNLTELHLMSNSIQKIKNNPFVKQKNLITLDLSHNGLSSTKLGTQVQLENLQELLLSNNKIQALKSEELDIFANSSLKKLELSSNQIKEFSPGCFHAIGRLFGLFLNNVQLGPSLTEKLCLELANTSIRNLSLSNSQLSTTSNTTFLGLKWTNLTMLDLSYNNLNVVGNDSFAWLPQLEYFFLEYNNIQHLFSHSLHGLFNVRYLNLKRSFTKQSISLASLPKIDDFSFQWLKCLEHLNMEDNDIPGIKSNMFTGLINLKYLSLSNSFTSLRTLTNETFVSLAHSPLHILNLTKNKISKIESDAFSWLGHLEVLDLGLNEIGQELTGQEWRGLENIFEIYLSYNKYLQLTRNSFALVPSLQRLMLRRVALKNVDSSPSPFQPLRNLTILDLSNNNIANINDDMLEGLEKLEILDLQHNNLARLWKHANPGGPIYFLKGLSHLHILNLESNGFDEIPVEVFKDLFELKIIDLGLNNLNTLPASVFNNQVSLKSLNLQKNLITSVEKKVFGPAFRNLTELDMRFNPFDCTCESIAWFVNWINETHTNIPELSSHYLCNTPPHYHGFPVRLFDTSSCKDSAPFELFFMINTSILLIFIFIVLLIHFEGWRISFYWNVSVHRVLGFKEIDRQTEQFEYAAYIIHAYKDKDWVWEHFSSMEKEDQSLKFCLEERDFEAGVFELEAIVNSIKRSRKIIFVITHHLLKDPLCKRFKVHHAVQQAIEQNLDSIILVFLEEIPDYKLNHALCLRRGMFKSHCILNWPVQKERIGAFRHKLQVALGSKNSVH.

The signal sequence occupies residues 1–23; that stretch reads MRQTLPCIYFWGGLLPFGMLCAS. Residues 24–51 form the LRRNT domain; it reads STTKCTVSHEVADCSHLKLTQVPDDLPT. At 24 to 704 the chain is on the lumenal side; the sequence is STTKCTVSHE…SCKDSAPFEL (681 aa). Cysteines 28 and 37 form a disulfide. N-linked (GlcNAc...) asparagine glycans are attached at residues Asn52, Asn57, and Asn70. 6 LRR repeats span residues 52-73, 76-97, 100-121, 124-145, 148-168, and 172-193; these read NITVLNLTHNQLRRLPAANFTR, QLTSLDVGFNTISKLEPELCQK, MLKVLNLQHNELSQLSDKTFAF, NLTELHLMSNSIQKIKNNPFVK, NLITLDLSHNGLSSTKLGTQV, and NLQELLLSNNKIQALKSEELDI. A disulfide bridge connects residues Cys95 and Cys122. Residue Asn124 is glycosylated (N-linked (GlcNAc...) asparagine). Asn196 carries an N-linked (GlcNAc...) asparagine glycan. LRR repeat units follow at residues 198-219 and 222-244; these read SLKKLELSSNQIKEFSPGCFHA and RLFGLFLNNVQLGPSLTEKLCLE. Residues Asn247, Asn252, Asn265, Asn275, and Asn291 are each glycosylated (N-linked (GlcNAc...) asparagine). LRR repeat units lie at residues 249 to 270, 275 to 296, 299 to 320, 323 to 344, 356 to 377, 380 to 400, 408 to 429, 432 to 454, 465 to 486, 507 to 528, 531 to 552, 563 to 584, 587 to 608, and 611 to 632; these read SIRNLSLSNSQLSTTSNTTFLG, NLTMLDLSYNNLNVVGNDSFAW, QLEYFFLEYNNIQHLFSHSLHG, NVRYLNLKRSFTKQSISLASLP, CLEHLNMEDNDIPGIKSNMFTG, NLKYLSLSNSFTSLRTLTNET, PLHILNLTKNKISKIESDAFSW, HLEVLDLGLNEIGQELTGQEWRG, YNKYLQLTRNSFALVPSLQRLM, NLTILDLSNNNIANINDDMLEG, KLEILDLQHNNLARLWKHANPG, HLHILNLESNGFDEIPVEVFKD, ELKIIDLGLNNLNTLPASVFNN, and SLKSLNLQKNLITSVEKKVFGP. N-linked (GlcNAc...) asparagine glycans are attached at residues Asn398 and Asn413. The N-linked (GlcNAc...) asparagine glycan is linked to Asn507. 2 N-linked (GlcNAc...) asparagine glycosylation sites follow: Asn636 and Asn662. Positions 645-698 constitute an LRRCT domain; the sequence is NPFDCTCESIAWFVNWINETHTNIPELSSHYLCNTPPHYHGFPVRLFDTSSCKD. Cystine bridges form between Cys649–Cys677 and Cys651–Cys696. The chain crosses the membrane as a helical span at residues 705-725; sequence FFMINTSILLIFIFIVLLIHF. Topologically, residues 726–904 are cytoplasmic; the sequence is EGWRISFYWN…VALGSKNSVH (179 aa). A TIR domain is found at 754–897; that stretch reads FEYAAYIIHA…AFRHKLQVAL (144 aa). Tyr759 carries the post-translational modification Phosphotyrosine. Residues Lys765, Lys812, and Lys831 each participate in a glycyl lysine isopeptide (Lys-Gly) (interchain with G-Cter in ubiquitin) cross-link. Residue Tyr858 is modified to Phosphotyrosine.

The protein belongs to the Toll-like receptor family. As to quaternary structure, monomer and homodimer; dimerization is triggered by ligand-binding, the signaling unit is composed of one ds-RNA of around 40 bp and two TLR3 molecules, and lateral clustering of signaling units along the length of the ds-RNA ligand is required for TLR3 signal transduction. Interacts (via transmembrane domain) with UNC93B1; the interaction is required for transport from the ER to the endosomes. Interacts with SRC; upon binding of double-stranded RNA. Interacts with TICAM1 (via the TIR domain) in response to poly(I:C) and this interaction is enhanced in the presence of WDFY1. The tyrosine-phosphorylated form (via TIR domain) interacts with WDFY1 (via WD repeat 2) in response to poly(I:C). Post-translationally, heavily N-glycosylated, except on that part of the surface of the ectodomain that is involved in ligand binding. TLR3 signaling requires a proteolytic cleavage mediated by cathepsins CTSB and CTSH, the cleavage occurs between amino acids 252 and 346. The cleaved form of TLR3 is the predominant form found in endosomes. In terms of processing, ubiquitinated by TRIM3; leading to recognition and sorting of polyubiquitinated TLR3 by the ESCRT complexes. Ubiquitinated by ZNRF1 via 'Lys-63'-linked ubiquitin chains; leading to TLR3 lysosomal trafficking and degradation. Ubiquitinated by RNF170 at Lys-765 via 'Lys-48'-linked ubiquitin chains; leading to TLR3 proteasomal degradation. As to expression, expressed at high level in placenta and pancreas. Also detected in CD11c+ immature dendritic cells. Only expressed in dendritic cells and not in other leukocytes, including monocyte precursors. TLR3 is the TLR that is expressed most strongly in the brain, especially in astrocytes, glia, and neurons.

It localises to the endoplasmic reticulum membrane. The protein localises to the endosome membrane. The protein resides in the early endosome. Key component of innate and adaptive immunity. TLRs (Toll-like receptors) control host immune response against pathogens through recognition of molecular patterns specific to microorganisms. TLR3 is a nucleotide-sensing TLR which is activated by double-stranded RNA, a sign of viral infection. Acts via the adapter TRIF/TICAM1, leading to NF-kappa-B activation, IRF3 nuclear translocation, cytokine secretion and the inflammatory response. The protein is Toll-like receptor 3 of Homo sapiens (Human).